We begin with the raw amino-acid sequence, 632 residues long: Effector protein hopAD1 (632 aa).

Positions 13–34 (TAVDSSLPTSATSQTISNTKSR) are disordered. Positions 15-32 (VDSSLPTSATSQTISNTK) are enriched in polar residues.

The protein localises to the secreted. This Pseudomonas syringae pv. tomato (strain ATCC BAA-871 / DC3000) protein is Effector protein hopAD1 (hopAD1).